The chain runs to 176 residues: Nascent polypeptide-associated complex subunit alpha (176 aa).

Residues 14–78 (SKNEKKAREL…AKVDDFTQRL (65 aa)) form the NAC-A/B domain. The tract at residues 85–127 (LQQNEGVLPAGQDAVSKDPQSIQADMQAAADSATDKPSADDAV) is disordered. The region spanning 137-176 (LNADDIELVMQQAGVPRAKAAKALKEHDSDIVNAIMALSG) is the UBA domain.

Belongs to the NAC-alpha family. Part of the nascent polypeptide-associated complex (NAC), consisting of EGD2 and EGD1. NAC associates with ribosomes via EGD1.

The protein resides in the cytoplasm. It is found in the nucleus. Component of the nascent polypeptide-associated complex (NAC), a dynamic component of the ribosomal exit tunnel, protecting the emerging polypeptides from interaction with other cytoplasmic proteins to ensure appropriate nascent protein targeting. The NAC complex also promotes mitochondrial protein import by enhancing productive ribosome interactions with the outer mitochondrial membrane and blocks the inappropriate interaction of ribosomes translating non-secretory nascent polypeptides with translocation sites in the membrane of the endoplasmic reticulum. EGD2 may also be involved in transcription regulation. The sequence is that of Nascent polypeptide-associated complex subunit alpha (EGD2) from Kluyveromyces lactis (strain ATCC 8585 / CBS 2359 / DSM 70799 / NBRC 1267 / NRRL Y-1140 / WM37) (Yeast).